The primary structure comprises 59 residues: Small integral membrane protein 30 (59 aa).

The N-terminal stretch at 1–24 (MNSVSTQLILVLASLLLILPVVEA) is a signal peptide. Residues 25 to 29 (VEAGD) lie on the Extracellular side of the membrane. A helical transmembrane segment spans residues 30-50 (AIALLLGVVLSITGICACLGI). Over 51 to 59 (YARKRNGQM) the chain is Cytoplasmic.

In terms of assembly, interacts (via transmembrane domain) with antiviral protein MAVS (via transmembrane domain); the interaction disrupts MAVS interaction with RIGI and inhibits MAVS aggregation, resulting in the repression of type I interferon signaling and innate immune responses.

The protein resides in the endoplasmic reticulum membrane. It is found in the mitochondrion membrane. Its function is as follows. Negatively regulates antiviral innate immune responses. Disrupts the interaction of antiviral protein MAVS with innate immune receptor RIGI and inhibits MAVS aggregation, resulting in the repression of type I interferon signaling and innate immune responses. In Mus musculus (Mouse), this protein is Small integral membrane protein 30.